The chain runs to 332 residues: Cell division protein ZipA (332 aa).

The Periplasmic portion of the chain corresponds to 1 to 6 (MMQDLR). A helical transmembrane segment spans residues 7–27 (LILIVVGAIAIIALLLHGLWT). Residues 28-332 (SRKERSSLFR…RIRDVLKANA (305 aa)) lie on the Cytoplasmic side of the membrane. A compositionally biased stretch (basic and acidic residues) spans 40–51 (PVKRAKKARDET). Residues 40 to 189 (PVKRAKKARD…VQPAPQQPAE (150 aa)) form a disordered region. Low complexity predominate over residues 76–88 (SFDSASVDSSSFD). Positions 93–105 (AREDVRSEAKSPF) are enriched in basic and acidic residues.

Belongs to the ZipA family. In terms of assembly, interacts with FtsZ via their C-terminal domains.

It is found in the cell inner membrane. In terms of biological role, essential cell division protein that stabilizes the FtsZ protofilaments by cross-linking them and that serves as a cytoplasmic membrane anchor for the Z ring. Also required for the recruitment to the septal ring of downstream cell division proteins. In Pectobacterium atrosepticum (strain SCRI 1043 / ATCC BAA-672) (Erwinia carotovora subsp. atroseptica), this protein is Cell division protein ZipA.